Here is a 257-residue protein sequence, read N- to C-terminus: OCIA domain-containing protein 1 (257 aa).

Disordered regions lie at residues Met-1–Leu-20 and Tyr-148–Asp-257. The 110-residue stretch at Met-1 to Glu-110 folds into the OCIA domain. Over residues Gly-156–Thr-170 the composition is skewed to polar residues. The span at Glu-204–Lys-216 shows a compositional bias: basic and acidic residues.

The protein belongs to the OCIAD1 family. As to quaternary structure, interacts with STAT3 and ARF1. In terms of tissue distribution, expressed in all cells of the primary lymph gland lobe.

It is found in the endosome. Functionally, maintains stem cell potency. Involved in endocytic pathways that mediate signaling during hematopoiesis. The polypeptide is OCIA domain-containing protein 1 (asrij) (Drosophila melanogaster (Fruit fly)).